A 322-amino-acid polypeptide reads, in one-letter code: Myeloid-associated differentiation marker (322 aa).

Positions 1 to 25 (MPVTVTRTTITTTTTSSSGQGSPTI) are disordered. S22 bears the Phosphoserine mark. 2 MARVEL domains span residues 31 to 163 (ALTQ…ARPG) and 168 to 319 (YMAT…HLVF). A run of 8 helical transmembrane segments spans residues 41-61 (LLQL…GAWT), 70-90 (FTWC…LCGL), 101-121 (FPIT…IIYP), 137-157 (AIAA…EVAW), 171-191 (TVPG…FAFI), 203-223 (LEWC…AILL), 239-259 (FLSG…VLWP), and 294-314 (LAVA…LVHS).

This sequence belongs to the MAL family.

It localises to the membrane. The polypeptide is Myeloid-associated differentiation marker (MYADM) (Pongo abelii (Sumatran orangutan)).